A 478-amino-acid polypeptide reads, in one-letter code: Protein nucleotidyltransferase YdiU (478 aa).

Residues G84, G86, R87, K107, D119, G120, R170, and R177 each contribute to the ATP site. D246 serves as the catalytic Proton acceptor. 2 residues coordinate Mg(2+): N247 and D256. D256 contacts ATP.

Belongs to the SELO family. The cofactor is Mg(2+). Mn(2+) is required as a cofactor.

The enzyme catalyses L-seryl-[protein] + ATP = 3-O-(5'-adenylyl)-L-seryl-[protein] + diphosphate. It carries out the reaction L-threonyl-[protein] + ATP = 3-O-(5'-adenylyl)-L-threonyl-[protein] + diphosphate. It catalyses the reaction L-tyrosyl-[protein] + ATP = O-(5'-adenylyl)-L-tyrosyl-[protein] + diphosphate. The catalysed reaction is L-histidyl-[protein] + UTP = N(tele)-(5'-uridylyl)-L-histidyl-[protein] + diphosphate. The enzyme catalyses L-seryl-[protein] + UTP = O-(5'-uridylyl)-L-seryl-[protein] + diphosphate. It carries out the reaction L-tyrosyl-[protein] + UTP = O-(5'-uridylyl)-L-tyrosyl-[protein] + diphosphate. Nucleotidyltransferase involved in the post-translational modification of proteins. It can catalyze the addition of adenosine monophosphate (AMP) or uridine monophosphate (UMP) to a protein, resulting in modifications known as AMPylation and UMPylation. The protein is Protein nucleotidyltransferase YdiU of Escherichia coli (strain K12 / MC4100 / BW2952).